Consider the following 227-residue polypeptide: Homeobox-leucine zipper protein ATHB-54 (227 aa).

The segment at residues 65 to 124 is a DNA-binding region (homeobox); it reads EITKKRKLTPIQLRLLEESFEEEKRLEPDRKLWLAEKLGLQPSQVAVWFQNRRARYKTKQ. A leucine-zipper region spans residues 125-153; it reads LEHDCDSLKASYAKLKTDWDILFVQNQTL. The segment at 175 to 198 is disordered; it reads IERKRLGEEGSSVKSDNTQYSEEE.

The protein belongs to the HD-ZIP homeobox family. Class I subfamily. In terms of tissue distribution, predominantly expressed in flowers and siliques.

It is found in the nucleus. In terms of biological role, probable transcription factor. The chain is Homeobox-leucine zipper protein ATHB-54 (ATHB-54) from Arabidopsis thaliana (Mouse-ear cress).